The following is a 340-amino-acid chain: Dihydroorotate dehydrogenase (quinone) (340 aa).

FMN is bound by residues 61–65 and T85; that span reads AGLDK. Residue K65 participates in substrate binding. Residue 110–114 coordinates substrate; it reads NRMGF. Residues N138 and N171 each coordinate FMN. N171 provides a ligand contact to substrate. S174 serves as the catalytic Nucleophile. N176 lines the substrate pocket. K216 and T244 together coordinate FMN. Substrate is bound at residue 245–246; that stretch reads NT. Residues G267, G296, and 317–318 contribute to the FMN site; that span reads YT.

Belongs to the dihydroorotate dehydrogenase family. Type 2 subfamily. In terms of assembly, monomer. FMN serves as cofactor.

It localises to the cell membrane. The enzyme catalyses (S)-dihydroorotate + a quinone = orotate + a quinol. It participates in pyrimidine metabolism; UMP biosynthesis via de novo pathway; orotate from (S)-dihydroorotate (quinone route): step 1/1. Its function is as follows. Catalyzes the conversion of dihydroorotate to orotate with quinone as electron acceptor. This chain is Dihydroorotate dehydrogenase (quinone), found in Marinobacter nauticus (strain ATCC 700491 / DSM 11845 / VT8) (Marinobacter aquaeolei).